The following is a 313-amino-acid chain: Porphobilinogen deaminase (313 aa).

Residue Cys-241 is modified to S-(dipyrrolylmethanemethyl)cysteine.

This sequence belongs to the HMBS family. In terms of assembly, monomer. Requires dipyrromethane as cofactor.

The catalysed reaction is 4 porphobilinogen + H2O = hydroxymethylbilane + 4 NH4(+). The protein operates within porphyrin-containing compound metabolism; protoporphyrin-IX biosynthesis; coproporphyrinogen-III from 5-aminolevulinate: step 2/4. It participates in porphyrin-containing compound metabolism; chlorophyll biosynthesis. Functionally, tetrapolymerization of the monopyrrole PBG into the hydroxymethylbilane pre-uroporphyrinogen in several discrete steps. The chain is Porphobilinogen deaminase from Chlorobium limicola (strain DSM 245 / NBRC 103803 / 6330).